A 241-amino-acid chain; its full sequence is Beta-nerve growth factor (241 aa).

The signal sequence occupies residues 1–18; it reads MSMLFYTLITALLIGVQA. A propeptide spanning residues 19-121 is cleaved from the precursor; sequence EPYTDSNLPE…SFNRTHRSKR (103 aa). N-linked (GlcNAc...) asparagine glycosylation is found at N69, N114, and N166. 3 cysteine pairs are disulfide-bonded: C136–C201, C179–C229, and C189–C231.

Belongs to the NGF-beta family. In terms of assembly, homodimer. The homodimer interacts with a single NTRK1 chain. The homodimer interacts with a single NGFR chain. The NGF dimer interacts with a single SORCS2 chain (via extracellular domain). The NGF precursor (proNGF) binds to a receptor complex formed by SORT1 and NGFR, which leads to NGF endocytosis. Both mature NGF and the immature NGF precursor (proNGF) interact with SORCS2 and with the heterodimer formed by SORCS2 and NGFR (via extracellular domains). The NGF precursor (proNGF) has much higher affinity for SORCS2 than mature NGF. The NGF precursor (proNGF) has much higher affinity for SORT1 than mature NGF. Interacts with ADAM10 in a divalent cation-dependent manner. Interacts with SORCS3.

It localises to the secreted. The protein resides in the endosome lumen. Nerve growth factor is important for the development and maintenance of the sympathetic and sensory nervous systems. Extracellular ligand for the NTRK1 and NGFR receptors, activates cellular signaling cascades through those receptor tyrosine kinase to regulate neuronal proliferation, differentiation and survival. Inhibits metalloproteinase dependent proteolysis of platelet glycoprotein VI. The chain is Beta-nerve growth factor (NGF) from Mastomys natalensis (African soft-furred rat).